Reading from the N-terminus, the 23-residue chain is Hemocyanin subunit 1 (23 aa).

Residues 1–23 (DSPGGASDTQKQHXVNSXXXKXY) are disordered.

It belongs to the tyrosinase family. Hemocyanin subfamily. As to expression, hemolymph.

Its subcellular location is the secreted. It is found in the extracellular space. Hemocyanins are copper-containing oxygen carriers occurring freely dissolved in the hemolymph of many mollusks and arthropods. The protein is Hemocyanin subunit 1 of Cancer pagurus (Rock crab).